Consider the following 310-residue polypeptide: Regulator of microtubule dynamics protein 1 (310 aa).

At K165 the chain carries N6-succinyllysine. TPR repeat units follow at residues 168 to 204 and 222 to 258; these read AICI…NPKD and PWYQ…DPNF.

The protein belongs to the RMDN family. Interacts with microtubules.

The protein resides in the cytoplasm. The protein localises to the cytoskeleton. Its subcellular location is the spindle. It localises to the spindle pole. This Rattus norvegicus (Rat) protein is Regulator of microtubule dynamics protein 1 (Rmdn1).